A 647-amino-acid polypeptide reads, in one-letter code: Shugoshin-2 (647 aa).

Ser-7 is subject to Phosphoserine. 2 coiled-coil regions span residues 28 to 87 (SKAQ…FHEE) and 125 to 145 (DEES…HDVS). The tract at residues 171–295 (REANVFSDTQ…DTVIQSTPTK (125 aa)) is disordered. Positions 200 to 210 (NLSNSKPVNNN) are enriched in low complexity. Ser-240 carries the phosphoserine modification. Polar residues-rich tracts occupy residues 242–253 (KSLSNKINNQAA) and 282–293 (RIQSDTVIQSTP). Thr-292 carries the phosphothreonine modification. A phosphoserine mark is found at Ser-332 and Ser-335. 2 stretches are compositionally biased toward polar residues: residues 375–396 (SLTS…NMTV) and 462–478 (EPPS…NNSP). Disordered stretches follow at residues 375-416 (SLTS…DSSV), 453-486 (RNPP…SLQG), 522-579 (TNLK…ERKK), and 593-647 (RNFD…TLNL). Composition is skewed to basic and acidic residues over residues 528 to 541 (NEND…SRRE) and 593 to 602 (RNFDLPSDHV). Residues 621 to 647 (KTETANITSEAPTTSEVTLENSETLNL) show a composition bias toward polar residues.

It belongs to the shugoshin family.

The protein localises to the chromosome. Its subcellular location is the centromere. Functionally, involved in chromosome cohesion during mitosis and meiosis by preventing premature dissociation of cohesin complex from centromeres after prophase, when most of cohesin complex dissociates from chromosomes arms. Required for faithful mitotic chromosome segregation and proper kinetochore orientation during meiosis I. In contrast to sgo1, it is dispensable for centromeric protection of rec8 during meiosis I as well as protection of rad21 during mitosis. Required to sense the lack of tension at centromeres during mitosis. In Schizosaccharomyces pombe (strain 972 / ATCC 24843) (Fission yeast), this protein is Shugoshin-2 (sgo2).